The chain runs to 307 residues: tRNA pseudouridine synthase B (307 aa).

Aspartate 48 acts as the Nucleophile in catalysis.

This sequence belongs to the pseudouridine synthase TruB family. Type 1 subfamily.

The catalysed reaction is uridine(55) in tRNA = pseudouridine(55) in tRNA. Responsible for synthesis of pseudouridine from uracil-55 in the psi GC loop of transfer RNAs. The polypeptide is tRNA pseudouridine synthase B (Neisseria meningitidis serogroup B (strain ATCC BAA-335 / MC58)).